Reading from the N-terminus, the 279-residue chain is Probable endonuclease 4 (279 aa).

Residues His-69, His-109, Glu-145, Asp-179, His-182, His-216, Asp-229, His-231, and Glu-261 each coordinate Zn(2+).

This sequence belongs to the AP endonuclease 2 family. Requires Zn(2+) as cofactor.

It catalyses the reaction Endonucleolytic cleavage to 5'-phosphooligonucleotide end-products.. Functionally, endonuclease IV plays a role in DNA repair. It cleaves phosphodiester bonds at apurinic or apyrimidinic (AP) sites, generating a 3'-hydroxyl group and a 5'-terminal sugar phosphate. This is Probable endonuclease 4 from Buchnera aphidicola subsp. Schizaphis graminum (strain Sg).